A 161-amino-acid polypeptide reads, in one-letter code: Nascent polypeptide-associated complex subunit beta (161 aa).

2 disordered regions span residues 14 to 41 (LSANNKVGGTRRKLAKKSGTASANKDDS) and 125 to 161 (QNAQAAAPATEGHEAGEKKDNDIPELIEGQSFDADVE). Residues 37-102 (NKDDSKLQAQ…PQEKSLQDLF (66 aa)) enclose the NAC-A/B domain. Residues 125-134 (QNAQAAAPAT) are compositionally biased toward low complexity. Over residues 135–146 (EGHEAGEKKDND) the composition is skewed to basic and acidic residues.

It belongs to the NAC-beta family. As to quaternary structure, part of the nascent polypeptide-associated complex (NAC), consisting of EGD2 and EGD1. NAC associates with ribosomes via EGD1.

Its subcellular location is the cytoplasm. It is found in the nucleus. Component of the nascent polypeptide-associated complex (NAC), a dynamic component of the ribosomal exit tunnel, protecting the emerging polypeptides from interaction with other cytoplasmic proteins to ensure appropriate nascent protein targeting. The NAC complex also promotes mitochondrial protein import by enhancing productive ribosome interactions with the outer mitochondrial membrane and blocks the inappropriate interaction of ribosomes translating non-secretory nascent polypeptides with translocation sites in the membrane of the endoplasmic reticulum. EGD1 may act as a transcription factor that exert a negative effect on the expression of several genes that are transcribed by RNA polymerase II. The polypeptide is Nascent polypeptide-associated complex subunit beta (EGD1) (Eremothecium gossypii (strain ATCC 10895 / CBS 109.51 / FGSC 9923 / NRRL Y-1056) (Yeast)).